The following is a 148-amino-acid chain: Deoxyuridine 5'-triphosphate nucleotidohydrolase (148 aa).

Residues 68-70 (RSG), Asn-81, 85-87 (TID), and Lys-95 contribute to the substrate site.

Belongs to the dUTPase family. Requires Mg(2+) as cofactor.

It catalyses the reaction dUTP + H2O = dUMP + diphosphate + H(+). Its pathway is pyrimidine metabolism; dUMP biosynthesis; dUMP from dCTP (dUTP route): step 2/2. In terms of biological role, this enzyme is involved in nucleotide metabolism: it produces dUMP, the immediate precursor of thymidine nucleotides and it decreases the intracellular concentration of dUTP so that uracil cannot be incorporated into DNA. In Rickettsia rickettsii (strain Iowa), this protein is Deoxyuridine 5'-triphosphate nucleotidohydrolase.